The sequence spans 503 residues: Cardiolipin synthase (503 aa).

The next 3 membrane-spanning stretches (helical) occupy residues 5–25 (LNVLLFLLILSTGLYLTRSFW), 29–49 (IVGAFSVLITITVVFIGIVIF), and 59–79 (LTWLMVLAVFPVVGFIFYLMF). 2 PLD phosphodiesterase domains span residues 238–265 (INYRNHRKIIVIDGTVGFVGGLNIGDEY) and 416–443 (TRGFLHSKIIIVDNEIASIGTSNMDMRS). Active-site residues include histidine 243, lysine 245, aspartate 250, histidine 421, lysine 423, and aspartate 428.

The protein belongs to the phospholipase D family. Cardiolipin synthase subfamily.

It is found in the cell membrane. It catalyses the reaction 2 a 1,2-diacyl-sn-glycero-3-phospho-(1'-sn-glycerol) = a cardiolipin + glycerol. Functionally, catalyzes the reversible phosphatidyl group transfer from one phosphatidylglycerol molecule to another to form cardiolipin (CL) (diphosphatidylglycerol) and glycerol. The sequence is that of Cardiolipin synthase (cls) from Halalkalibacterium halodurans (strain ATCC BAA-125 / DSM 18197 / FERM 7344 / JCM 9153 / C-125) (Bacillus halodurans).